We begin with the raw amino-acid sequence, 130 residues long: Histone H2A (130 aa).

N6-acetyllysine occurs at positions 4 and 7. Residue glutamine 105 is modified to N5-methylglutamine. Serine 127 is modified (phosphoserine). The [ST]-Q motif signature appears at 127 to 128; sequence SQ.

It belongs to the histone H2A family. In terms of assembly, the nucleosome is a histone octamer containing two molecules each of H2A, H2B, H3 and H4 assembled in one H3-H4 heterotetramer and two H2A-H2B heterodimers. The octamer wraps approximately 147 bp of DNA. Post-translationally, phosphorylated to form H2AS128ph (gamma-H2A) in response to DNA double-strand breaks (DSBs) generated by exogenous genotoxic agents and by stalled replication forks. Phosphorylation is dependent on the DNA damage checkpoint kinases MEC1/ATR and TEL1/ATM, spreads on either side of a detected DSB site and may mark the surrounding chromatin for recruitment of proteins required for DNA damage signaling and repair. Gamma-H2A is removed from the DNA prior to the strand invasion-primer extension step of the repair process and subsequently dephosphorylated by PPH3, a component of the histone H2A phosphatase complex (HTP-C). Dephosphorylation is necessary for efficient recovery from the DNA damage checkpoint. Acetylated by ESA1 to form H2AK4ac and H2AK7ac.

The protein resides in the nucleus. Its subcellular location is the chromosome. Functionally, core component of nucleosome which plays a central role in DNA double strand break (DSB) repair. Nucleosomes wrap and compact DNA into chromatin, limiting DNA accessibility to the cellular machineries which require DNA as a template. Histones thereby play a central role in transcription regulation, DNA repair, DNA replication and chromosomal stability. DNA accessibility is regulated via a complex set of post-translational modifications of histones, also called histone code, and nucleosome remodeling. This chain is Histone H2A (HTA1), found in Kluyveromyces lactis (strain ATCC 8585 / CBS 2359 / DSM 70799 / NBRC 1267 / NRRL Y-1140 / WM37) (Yeast).